The following is a 449-amino-acid chain: MGKEKQHVSIVVIGHVDSGKSTTTGHLIYKCGGIEKRAIEKFEKEAAEMGKGSFKYAWVLDKLKAERERGITIDIALWKFETEKYSFTIIDAPGHRDFIKNMITGTSQADLAILVIASPPGEFEAGISQNGQTREHALLAYTLGVKQMIVACNKMDDKNVNWSQDRYEEVSKEMDLYLKKVGYNPAKVPKVPTSGWTGENLFERTDKTHALGKWYKGPCLLEALDNCDPPKRPVDKPLRLPLQDVYKIGGIGTVPVGRVETGLIKPGMVVTFAPSGLSTEVKSVEMHHEALPQAGPGDNVGFNVKNVSVKDLKRGYVCGDSKNDPPKGCASFNAQVIILNHPGEIHAGYAPVLDCHTAHIACKFSELILKMDRRSGKKLEDTPKMIKSGDAAMVKMVASKPMCVEAFTQYPPLGRFAVRDMRQTVAVGVIKSVEKKEVEGKMTKSAAKK.

Residues 5 to 234 (KQHVSIVVIG…DNCDPPKRPV (230 aa)) enclose the tr-type G domain. Residues 14–21 (GHVDSGKS) are G1. 14 to 21 (GHVDSGKS) is a GTP binding site. Lys55 carries the post-translational modification N6,N6-dimethyllysine. Residues 70–74 (GITID) are G2. Lys79 is subject to N6,N6,N6-trimethyllysine. Residues 91-94 (DAPG) form a G3 region. GTP contacts are provided by residues 91–95 (DAPGH) and 153–156 (NKMD). A G4 region spans residues 153–156 (NKMD). An N6,N6,N6-trimethyllysine modification is found at Lys187. The tract at residues 194–196 (SGW) is G5. At Lys265 the chain carries N6-methyllysine. Lys310 and Lys400 each carry N6,N6,N6-trimethyllysine.

This sequence belongs to the TRAFAC class translation factor GTPase superfamily. Classic translation factor GTPase family. EF-Tu/EF-1A subfamily.

The protein localises to the cytoplasm. This protein promotes the GTP-dependent binding of aminoacyl-tRNA to the A-site of ribosomes during protein biosynthesis. In Pyropia yezoensis (Susabi-nori), this protein is Elongation factor 1-alpha.